Consider the following 185-residue polypeptide: Elongation factor P (185 aa).

Belongs to the elongation factor P family.

The protein localises to the cytoplasm. The protein operates within protein biosynthesis; polypeptide chain elongation. Involved in peptide bond synthesis. Stimulates efficient translation and peptide-bond synthesis on native or reconstituted 70S ribosomes in vitro. Probably functions indirectly by altering the affinity of the ribosome for aminoacyl-tRNA, thus increasing their reactivity as acceptors for peptidyl transferase. The protein is Elongation factor P of Pseudothermotoga lettingae (strain ATCC BAA-301 / DSM 14385 / NBRC 107922 / TMO) (Thermotoga lettingae).